We begin with the raw amino-acid sequence, 195 residues long: 3-isopropylmalate dehydratase small subunit (195 aa).

The protein belongs to the LeuD family. LeuD type 1 subfamily. Heterodimer of LeuC and LeuD.

The enzyme catalyses (2R,3S)-3-isopropylmalate = (2S)-2-isopropylmalate. The protein operates within amino-acid biosynthesis; L-leucine biosynthesis; L-leucine from 3-methyl-2-oxobutanoate: step 2/4. Functionally, catalyzes the isomerization between 2-isopropylmalate and 3-isopropylmalate, via the formation of 2-isopropylmaleate. This chain is 3-isopropylmalate dehydratase small subunit, found in Parafrankia sp. (strain EAN1pec).